A 204-amino-acid polypeptide reads, in one-letter code: Large ribosomal subunit protein eL15 (204 aa).

Gly-2 carries N-myristoyl glycine lipidation. Ser-34 carries the phosphoserine modification. Lys-83 is covalently cross-linked (Glycyl lysine isopeptide (Lys-Gly) (interchain with G-Cter in SUMO2)). 2 positions are modified to phosphoserine: Ser-97 and Ser-100. The disordered stretch occupies residues 165-186 (TSAGRKSRGLGKGHKFHHTIGG). Residues 169 to 182 (RKSRGLGKGHKFHH) are compositionally biased toward basic residues.

This sequence belongs to the eukaryotic ribosomal protein eL15 family. As to quaternary structure, component of the large ribosomal subunit. Interacts with IFIT1 (via TPR repeats 1-4).

The protein localises to the cytoplasm. In terms of biological role, component of the large ribosomal subunit. The ribosome is a large ribonucleoprotein complex responsible for the synthesis of proteins in the cell. This Bos taurus (Bovine) protein is Large ribosomal subunit protein eL15 (RPL15).